Reading from the N-terminus, the 68-residue chain is Dermaseptin-H5 (68 aa).

An N-terminal signal peptide occupies residues 1-17; it reads KSLFLVLFLGMVSLSIC. Residues 18-38 constitute a propeptide that is removed on maturation; it reads EEEKRENEDEEKQEDDEQSEM. Residues 19–40 are disordered; it reads EEKRENEDEEKQEDDEQSEMKR. Over residues 25 to 35 the composition is skewed to acidic residues; that stretch reads EDEEKQEDDEQ. At Leu-65 the chain carries Leucine amide. Positions 67–68 are excised as a propeptide; it reads EQ.

In terms of tissue distribution, expressed by the skin glands.

The protein resides in the secreted. Functionally, has antibacterial activity against the Gram-negative bacteria E.coli ATCC 11775 (MIC=0.5 uM), and the Gram-positive bacteria S.aureus ATCC 12600 (MIC=0.5 uM) and M.luteus ATCC 49732 (MIC=2.0 uM). Does not inhibit the growth of the fungus C.albicans. Probably acts by disturbing membrane functions with its amphipathic structure. This is Dermaseptin-H5 from Pithecopus azureus (Orange-legged monkey tree frog).